An 866-amino-acid polypeptide reads, in one-letter code: Autophagy-related protein 9 (866 aa).

Over 1–94 the chain is Cytoplasmic; it reads MMSSGHKGPN…KGLWCIIVKW (94 aa). A helical transmembrane segment spans residues 95–115; that stretch reads AVELLSLGFIICFSGFFLLYV. At 116–153 the chain is on the lumenal side; it reads DWNGLQNAKCGMDAVESGTKPCDLVKEAIHPHPLSPFT. Residues 154 to 174 traverse the membrane as a helical segment; sequence LTTAIIVGYLALFSVYWLFCF. The Cytoplasmic portion of the chain corresponds to 175–319; that stretch reads LRFFAQLKDT…VSNPTTLKKR (145 aa). The stretch at 320–340 is an intramembrane region; that stretch reads LFVVGLAMLLLSPFLVIFMLV. At 341 to 404 the chain is on the cytoplasmic side; that stretch reads YLFLRHAEQF…LKQFPSPIIS (64 aa). A helical membrane pass occupies residues 405–425; it reads IIAKFVSFVSGGFAAVLIIIA. Residues 426–433 are Lumenal-facing; it reads FLEESLLE. The chain crosses the membrane as a helical span at residues 434 to 454; that stretch reads GHIFGRNLFWYAAVFGTITAI. Residues 455-507 are Cytoplasmic-facing; that stretch reads SRAAISDELLVLDPVGTMSLVVQNTHYMPKRWRGKENKDDVRLELETLFQYTG. Residues 508–528 lie within the membrane without spanning it; sequence MMLLEEIASIFITPFLLMFVV. At 529-866 the chain is on the cytoplasmic side; that stretch reads PKRVDDILQF…ETSTSSTTLR (338 aa). A disordered region spans residues 744–781; sequence QPEGEDSYGSQHPLDGRNQWWGRGNHSQISTAHPATTN. The segment covering 768–781 has biased composition (polar residues); it reads NHSQISTAHPATTN.

The protein belongs to the ATG9 family. Homotrimer; forms a homotrimer with a central pore that forms a path between the two membrane leaflets. In terms of tissue distribution, expressed in roots, leaves, stems and flowers.

The protein resides in the preautophagosomal structure membrane. Phospholipid scramblase involved in autophagy by mediating autophagosomal membrane expansion. Cycles between the preautophagosomal structure/phagophore assembly site (PAS) and the cytoplasmic vesicle pool and supplies membrane for the growing autophagosome. Lipid scramblase activity plays a key role in preautophagosomal structure/phagophore assembly by distributing the phospholipids that arrive through ATG2 from the cytoplasmic to the luminal leaflet of the bilayer, thereby driving autophagosomal membrane expansion. In addition to autophagy, also plays a role in necrotic cell death. Plays an essential role in plant nutrient recycling. This chain is Autophagy-related protein 9, found in Arabidopsis thaliana (Mouse-ear cress).